The primary structure comprises 376 residues: Heme chaperone HemW (376 aa).

The Radical SAM core domain occupies 1–233; that stretch reads MFTLPPISLY…DKLLKKAGYK (233 aa). Tyrosine 10 lines the S-adenosyl-L-methionine pocket. Residues cysteine 16, cysteine 20, and cysteine 23 each coordinate [4Fe-4S] cluster. S-adenosyl-L-methionine is bound by residues glycine 66, 67–68, glutamate 99, glutamine 126, arginine 138, and aspartate 162; that span reads GT.

Belongs to the anaerobic coproporphyrinogen-III oxidase family. HemW subfamily. It depends on [4Fe-4S] cluster as a cofactor.

It is found in the cytoplasm. Probably acts as a heme chaperone, transferring heme to an unknown acceptor. Binds one molecule of heme per monomer, possibly covalently. Binds 1 [4Fe-4S] cluster. The cluster is coordinated with 3 cysteines and an exchangeable S-adenosyl-L-methionine. In Buchnera aphidicola subsp. Acyrthosiphon pisum (strain APS) (Acyrthosiphon pisum symbiotic bacterium), this protein is Heme chaperone HemW.